Consider the following 227-residue polypeptide: Ribonuclease 3 (227 aa).

In terms of domain architecture, RNase III spans 4 to 133 (FETLEKLLGY…LIAAIYLDSN (130 aa)). Residue Glu46 participates in Mg(2+) binding. Asp50 is an active-site residue. 2 residues coordinate Mg(2+): Asn119 and Glu122. Residue Glu122 is part of the active site. One can recognise a DRBM domain in the interval 158–226 (DPKTALQEWA…ARDLLHRLQD (69 aa)).

Belongs to the ribonuclease III family. Homodimer. The cofactor is Mg(2+).

It localises to the cytoplasm. The catalysed reaction is Endonucleolytic cleavage to 5'-phosphomonoester.. In terms of biological role, digests double-stranded RNA. Involved in the processing of primary rRNA transcript to yield the immediate precursors to the large and small rRNAs (23S and 16S). Processes some mRNAs, and tRNAs when they are encoded in the rRNA operon. Processes pre-crRNA and tracrRNA of type II CRISPR loci if present in the organism. The protein is Ribonuclease 3 of Rickettsia akari (strain Hartford).